Here is a 97-residue protein sequence, read N- to C-terminus: Mapk-regulated corepressor-interacting protein 1 (97 aa).

The segment at 1-29 (MTSSPVSRVVYNGKRNSSPRSPTNSSEIF) is disordered. The segment covering 15–26 (RNSSPRSPTNSS) has biased composition (low complexity). At Ser21 the chain carries Phosphoserine. Thr30 is modified (phosphothreonine). Position 41 is a phosphotyrosine (Tyr41). Lys79 is subject to N6-acetyllysine. Positions 80-84 (PIDLS) match the PXDLS motif motif.

This sequence belongs to the MCRIP family. In terms of assembly, interacts (unphosphorylated form, via the PXDLS motif) with CTBP1, competitively inhibiting CTBP-ZEB1 interaction. Interacts with CTBP2. Interacts with MCRIP2. Interacts with DDX6. In terms of processing, phosphorylation by MAPK3/1 (ERK1/2) regulates MCRIP1 binding to CTBP(s). As to expression, widely expressed (at protein level).

Its subcellular location is the nucleus. It is found in the cytoplasm. The protein localises to the stress granule. In terms of biological role, the phosphorylation status of MCRIP1 functions as a molecular switch to regulate epithelial-mesenchymal transition. Unphosphorylated MCRIP1 binds to and inhibits the transcriptional corepressor CTBP(s). When phosphorylated by MAPK/ERK, MCRIP1 releases CTBP(s) resulting in transcriptional silencing of the E-cadherin gene and induction of epithelial-mesenchymal transition. In Mus musculus (Mouse), this protein is Mapk-regulated corepressor-interacting protein 1 (Mcrip1).